A 444-amino-acid chain; its full sequence is Exodeoxyribonuclease 7 large subunit (444 aa).

Belongs to the XseA family. Heterooligomer composed of large and small subunits.

The protein resides in the cytoplasm. It carries out the reaction Exonucleolytic cleavage in either 5'- to 3'- or 3'- to 5'-direction to yield nucleoside 5'-phosphates.. Its function is as follows. Bidirectionally degrades single-stranded DNA into large acid-insoluble oligonucleotides, which are then degraded further into small acid-soluble oligonucleotides. This Rickettsia conorii (strain ATCC VR-613 / Malish 7) protein is Exodeoxyribonuclease 7 large subunit.